The primary structure comprises 84 residues: uncharacterized protein (84 aa).

A helical membrane pass occupies residues 25–45 (ILMTVAGFIIAFAILVFQISF).

The protein resides in the membrane. This is an uncharacterized protein from Bacillus anthracis.